The chain runs to 309 residues: Taste receptor type 2 member 20 (309 aa).

The Extracellular segment spans residues 1–6 (MMSFLH). Residues 7-27 (IVFSILVVVAFILGNFANGFI) form a helical membrane-spanning segment. Residues 28 to 46 (ALINFIAWVKRQKISSADQ) lie on the Cytoplasmic side of the membrane. The chain crosses the membrane as a helical span at residues 47-67 (IIAALAVSRVGLLWVILLHWY). Residues 68–79 (STVLNPTSSNLK) lie on the Extracellular side of the membrane. Residues 80 to 100 (VIIFISNAWAVTNHFSIWLAT) traverse the membrane as a helical segment. The Cytoplasmic portion of the chain corresponds to 101-125 (SLSIFYLLKIVNFSRLIFHHLKRKA). A helical membrane pass occupies residues 126–146 (KSVVLVIVLGSLFFLVCHLVM). The Extracellular segment spans residues 147–178 (KHTYINVWTEECEGNVTWKIKLRNAMHLSNLT). Residues asparagine 161 and asparagine 176 are each glycosylated (N-linked (GlcNAc...) asparagine). Residues 179–199 (VAMLANLIPFTLTLISFLLLI) form a helical membrane-spanning segment. Over 200-229 (YSLCKHLKKMQLHGKGSQDPSTKIHIKALQ) the chain is Cytoplasmic. Residues 230–250 (TVTSFLILLAIYFLCLIISFW) traverse the membrane as a helical segment. At 251–259 (NFKMRPKEI) the chain is on the extracellular side. The chain crosses the membrane as a helical span at residues 260 to 280 (VLMLCQAFGIIYPSFHSFILI). Topologically, residues 281-309 (WGNKTLKQTFLSVLWQVTCWAKGQNQSTP) are cytoplasmic.

It belongs to the G-protein coupled receptor T2R family. Expressed in subsets of taste receptor cells of the tongue and exclusively in gustducin-positive cells.

The protein resides in the membrane. Functionally, receptor that may play a role in the perception of bitterness and is gustducin-linked. May play a role in sensing the chemical composition of the gastrointestinal content. The activity of this receptor may stimulate alpha gustducin, mediate PLC-beta-2 activation and lead to the gating of TRPM5. The protein is Taste receptor type 2 member 20 (TAS2R20) of Homo sapiens (Human).